Reading from the N-terminus, the 135-residue chain is Small ribosomal subunit protein uS12 (135 aa).

At Asp89 the chain carries 3-methylthioaspartic acid. The disordered stretch occupies residues 101–135 (SLDTSGVADRKQSRSKYGAKQPKAGAAAPAKGKGR). The span at 118-135 (GAKQPKAGAAAPAKGKGR) shows a compositional bias: low complexity.

This sequence belongs to the universal ribosomal protein uS12 family. Part of the 30S ribosomal subunit. Contacts proteins S8 and S17. May interact with IF1 in the 30S initiation complex.

In terms of biological role, with S4 and S5 plays an important role in translational accuracy. Functionally, interacts with and stabilizes bases of the 16S rRNA that are involved in tRNA selection in the A site and with the mRNA backbone. Located at the interface of the 30S and 50S subunits, it traverses the body of the 30S subunit contacting proteins on the other side and probably holding the rRNA structure together. The combined cluster of proteins S8, S12 and S17 appears to hold together the shoulder and platform of the 30S subunit. This Chlorobium limicola (strain DSM 245 / NBRC 103803 / 6330) protein is Small ribosomal subunit protein uS12.